We begin with the raw amino-acid sequence, 804 residues long: Endoplasmin (804 aa).

The signal sequence occupies residues 1 to 21 (MRALWVLGLCCVLLTFGSVRA). The SRT pseudosubstrate motif motif lies at 42-44 (SRT). Residue N62 is glycosylated (N-linked (GlcNAc...) asparagine). S64 bears the Phosphoserine mark. N107 is a glycosylation site (N-linked (GlcNAc...) asparagine). N107, D149, and N162 together coordinate ATP. N6-(2-hydroxyisobutyryl)lysine is present on K168. The residue at position 172 (S172) is a Phosphoserine. F199 serves as a coordination point for ATP. N-linked (GlcNAc...) asparagine glycosylation occurs at N217. Position 288 is a phosphothreonine; by CK2 (T288). The segment at 288 to 323 (TVEEPMEEEEAAKEEKEDSDDEAAVEEEEEEKKPKT) is disordered. Over residues 289–317 (VEEPMEEEEAAKEEKEDSDDEAAVEEEEE) the composition is skewed to acidic residues. S306 carries the post-translational modification Phosphoserine; by CK2. A Phosphoserine modification is found at S403. The residue at position 404 (K404) is an N6-succinyllysine. The N-linked (GlcNAc...) asparagine glycan is linked to N445. Position 447 is a phosphoserine (S447). Position 479 is an N6-acetyllysine (K479). Residues N481 and N502 are each glycosylated (N-linked (GlcNAc...) asparagine). K633 is subject to N6-succinyllysine. Positions 750–804 (DPDAKVEEEPEEEPEETTEDTTEDTEQDDEEEMDAGTDDEEQETVKKSTAEKDEL) are disordered. Positions 757 to 791 (EEPEEEPEETTEDTTEDTEQDDEEEMDAGTDDEEQ) are enriched in acidic residues. Residues T766, T770, T774, and T786 each carry the phosphothreonine; by CK2 modification. Residues 792-804 (ETVKKSTAEKDEL) show a composition bias toward basic and acidic residues. The Prevents secretion from ER signature appears at 801–804 (KDEL).

It belongs to the heat shock protein 90 family. As to quaternary structure, homodimer; disulfide-linked. Component of an EIF2 complex at least composed of CELF1/CUGBP1, CALR, CALR3, EIF2S1, EIF2S2, HSP90B1 and HSPA5. Part of a large chaperone multiprotein complex comprising DNAJB11, HSP90B1, HSPA5, HYOU, PDIA2, PDIA4, PDIA6, PPIB, SDF2L1, UGGT1 and very small amounts of ERP29, but not, or at very low levels, CALR nor CANX. Interacts with AIMP1; regulates its retention in the endoplasmic reticulum. Hyperglycosylated form interacts with OS9; promoting its degradation by the endoplasmic reticulum associated degradation (ERAD). Interacts with CNPY3. This interaction is disrupted in the presence of ATP. Interacts with TLR4 and TLR9, but not with TLR3. Interacts with MZB1 in a calcium-dependent manner. Interacts with METTL23. Interacts with IL1B; the interaction facilitates cargo translocation into the ERGIC. Interacts with EIF2AK3. Phosphorylated by CK2. In terms of processing, N-glycosylated cotranslationally at Asn-217 by STT3A-containing OST-A complex: this glycosylation is constitutive. In response to various stress, 5 additional facultative sites (Asn-62, Asn-107, Asn-445, Asn-481 and Asn-502) can be glycosylated post-translationally by STT3B-containing OST-B complex, leading to a hyperglycosylated form that is degraded by the ER-associated degradation (ERAD) pathway. In normal conditions, the OST-A complex together with CCDC134 prevent glycosylation at facultative sites during protein folding, thereby preventing hyperglycosylation. Mechanistically, nascent HSP90B1 is tethered during translation to a specialized CCDC134-containing translocon that forms a microenvironment for its folding, in which STT3A associates with the SRT pseudosubstrate motif, and prevents access to facultative glycosylation sites until folding is completed, rendering its facultative sites inaccessible to the OST-B complex. Detected in heart muscle (at protein level).

The protein localises to the endoplasmic reticulum lumen. Its subcellular location is the sarcoplasmic reticulum lumen. The protein resides in the melanosome. It catalyses the reaction ATP + H2O = ADP + phosphate + H(+). Its function is as follows. ATP-dependent chaperone involved in the processing of proteins in the endoplasmic reticulum, regulating their transport. Together with MESD, acts as a modulator of the Wnt pathway by promoting the folding of LRP6, a coreceptor of the canonical Wnt pathway. When associated with CNPY3, required for proper folding of Toll-like receptors. Promotes folding and trafficking of TLR4 to the cell surface. May participate in the unfolding of cytosolic leaderless cargos (lacking the secretion signal sequence) such as the interleukin 1/IL-1 to facilitate their translocation into the ERGIC (endoplasmic reticulum-Golgi intermediate compartment) and secretion; the translocation process is mediated by the cargo receptor TMED10. May also function in endoplasmic reticulum associated degradation (ERAD); it is however unclear whether it participates to ERAD or is a target of ERAD. The polypeptide is Endoplasmin (HSP90B1) (Canis lupus familiaris (Dog)).